Here is a 387-residue protein sequence, read N- to C-terminus: UDP-N-acetylglucosamine--N-acetylmuramyl-(pentapeptide) pyrophosphoryl-undecaprenol N-acetylglucosamine transferase (387 aa).

UDP-N-acetyl-alpha-D-glucosamine contacts are provided by residues 14-16 (TGG), Asn124, Arg167, Ser195, and Gln296. A disordered region spans residues 366 to 387 (LPQQNSIEEDSTFEKNQEGAVA). The span at 377 to 387 (TFEKNQEGAVA) shows a compositional bias: basic and acidic residues.

The protein belongs to the glycosyltransferase 28 family. MurG subfamily.

The protein localises to the cell inner membrane. The enzyme catalyses di-trans,octa-cis-undecaprenyl diphospho-N-acetyl-alpha-D-muramoyl-L-alanyl-D-glutamyl-meso-2,6-diaminopimeloyl-D-alanyl-D-alanine + UDP-N-acetyl-alpha-D-glucosamine = di-trans,octa-cis-undecaprenyl diphospho-[N-acetyl-alpha-D-glucosaminyl-(1-&gt;4)]-N-acetyl-alpha-D-muramoyl-L-alanyl-D-glutamyl-meso-2,6-diaminopimeloyl-D-alanyl-D-alanine + UDP + H(+). Its pathway is cell wall biogenesis; peptidoglycan biosynthesis. Its function is as follows. Cell wall formation. Catalyzes the transfer of a GlcNAc subunit on undecaprenyl-pyrophosphoryl-MurNAc-pentapeptide (lipid intermediate I) to form undecaprenyl-pyrophosphoryl-MurNAc-(pentapeptide)GlcNAc (lipid intermediate II). The polypeptide is UDP-N-acetylglucosamine--N-acetylmuramyl-(pentapeptide) pyrophosphoryl-undecaprenol N-acetylglucosamine transferase (Zymomonas mobilis subsp. mobilis (strain ATCC 31821 / ZM4 / CP4)).